The chain runs to 472 residues: Siroheme synthase 2 (472 aa).

The tract at residues Met1–Val204 is precorrin-2 dehydrogenase /sirohydrochlorin ferrochelatase. Residues Glu22–Val23 and Cys43–Glu44 contribute to the NAD(+) site. A Phosphoserine modification is found at Ser128. The interval Gly216–Gly472 is uroporphyrinogen-III C-methyltransferase. Pro225 is a binding site for S-adenosyl-L-methionine. Residue Asp248 is the Proton acceptor of the active site. Residue Lys270 is the Proton donor of the active site. Residues Gly301–Asp303, Ile306, Thr331–Ala332, Met382, and Gly411 contribute to the S-adenosyl-L-methionine site.

In the N-terminal section; belongs to the precorrin-2 dehydrogenase / sirohydrochlorin ferrochelatase family. The protein in the C-terminal section; belongs to the precorrin methyltransferase family.

It carries out the reaction uroporphyrinogen III + 2 S-adenosyl-L-methionine = precorrin-2 + 2 S-adenosyl-L-homocysteine + H(+). The catalysed reaction is precorrin-2 + NAD(+) = sirohydrochlorin + NADH + 2 H(+). The enzyme catalyses siroheme + 2 H(+) = sirohydrochlorin + Fe(2+). It participates in cofactor biosynthesis; adenosylcobalamin biosynthesis; precorrin-2 from uroporphyrinogen III: step 1/1. Its pathway is cofactor biosynthesis; adenosylcobalamin biosynthesis; sirohydrochlorin from precorrin-2: step 1/1. It functions in the pathway porphyrin-containing compound metabolism; siroheme biosynthesis; precorrin-2 from uroporphyrinogen III: step 1/1. The protein operates within porphyrin-containing compound metabolism; siroheme biosynthesis; siroheme from sirohydrochlorin: step 1/1. It participates in porphyrin-containing compound metabolism; siroheme biosynthesis; sirohydrochlorin from precorrin-2: step 1/1. Multifunctional enzyme that catalyzes the SAM-dependent methylations of uroporphyrinogen III at position C-2 and C-7 to form precorrin-2 via precorrin-1. Then it catalyzes the NAD-dependent ring dehydrogenation of precorrin-2 to yield sirohydrochlorin. Finally, it catalyzes the ferrochelation of sirohydrochlorin to yield siroheme. The polypeptide is Siroheme synthase 2 (Yersinia enterocolitica serotype O:8 / biotype 1B (strain NCTC 13174 / 8081)).